The primary structure comprises 522 residues: Cytochrome P450 monooxygenase FGSG_08207 (522 aa).

Residues 10–30 form a helical membrane-spanning segment; that stretch reads LLLSKPVVLGLAACALLFLIG. N-linked (GlcNAc...) asparagine glycosylation is found at Asn104 and Asn155. Cys441 contacts heme.

The protein belongs to the cytochrome P450 family. Requires heme as cofactor.

It is found in the membrane. Its pathway is secondary metabolite biosynthesis. Its function is as follows. Cytochrome P450 monooxygenase; part of the gene cluster that mediates the biosynthesis of the lipopeptide fusaristatin A. Fusaristatin A consists of a polyketide chain linked to three amino acid residues glutamine (Gln), dehydroalanine (dehydro-Ala), and beta-aminoisobutyric acid. The biosynthesis starts with formation of a linear polyketide chain by the highly reducing polyketide synthase PKS6. The gene cluster does not contain an acyl-CoA ligase or an acyl-transferase, and it is therefore predicted that the polyketide is transferred directly to the nonribosomal peptide synthetase NRPS7. Modules 1-3 from NRPS7 incorporate dehydro-Ala, Gln, and beta-aminoisobutyric acid in the compound, which is released by cyclization. The beta-aminoisobutyric acid units are most likely not freely available to the NRPS, but can be synthesized from thymine, which requires a dehydrogenase, a monooxygenase, and an aminotransferase. The fusaristatin A cluster contains a cytochrome P450 monooxygenase (FGSG_08207) and an aminotransferase (FGSG_17085), which theoretically can perform two of the enzymatic steps. The enzymes may however also be involved in biosynthesis of dehydroalanine or modification of the polyketide. The dehydro-Ala residue can be a result of cyclization, where serine is dehydrated. The last gene of the cluster encodes a protein with an A/B barrel domain found in variable enzymes, which hampers functional prediction. In Gibberella zeae (strain ATCC MYA-4620 / CBS 123657 / FGSC 9075 / NRRL 31084 / PH-1) (Wheat head blight fungus), this protein is Cytochrome P450 monooxygenase FGSG_08207.